The primary structure comprises 142 residues: NCT transcriptional regulatory complex subunit B (142 aa).

Belongs to the NC2 beta/DR1 family. As to quaternary structure, forms the NCT transcriptional regulatory complex with nctA and mot1.

It localises to the nucleus. Its function is as follows. Part of the NCT transcriptional regulatory complex that acts as a key regulator of ergosterol biosynthesis and the azole exporter cdr1B. The NCT complex binds the promoters of genes linked to azole susceptibility, and especially represses the expression of cdr1B transporter. This is NCT transcriptional regulatory complex subunit B from Aspergillus fumigatus (strain CBS 144.89 / FGSC A1163 / CEA10) (Neosartorya fumigata).